Here is a 650-residue protein sequence, read N- to C-terminus: Vitrin (650 aa).

The first 26 residues, 1–26 (MGIVVPTMKASVIEVLLVLLVTGIHS), serve as a signal peptide directing secretion. The 94-residue stretch at 40–133 (TVPQINCDVK…LSLPRWRESF (94 aa)) folds into the LCCL domain. Intrachain disulfides connect Cys46/Cys62 and Cys66/Cys86. A disordered region spans residues 198–226 (RSTSKPFAASVTNSPRPQPVGHRSQEMEE). VWFA domains lie at 265–450 (DLSF…VKRV) and 467–640 (DIGF…IQNI). An N-linked (GlcNAc...) asparagine glycan is attached at Asn492.

Binds dermatan sulfate and chondroitin sulfate.

The protein resides in the secreted. Its subcellular location is the extracellular space. It is found in the extracellular matrix. Promotes matrix assembly and cell adhesiveness. Plays a role in spinal cord formation by regulating the proliferation and differentiation of neural stem cells. The protein is Vitrin (Vit) of Mus musculus (Mouse).